A 273-amino-acid chain; its full sequence is Tetraspanin-8 (273 aa).

The Cytoplasmic portion of the chain corresponds to 1 to 7; it reads MARCSNN. Residues 8–28 form a helical membrane-spanning segment; that stretch reads LVGILNFLVFLLSIPILAGGI. Residues 29–45 lie on the Extracellular side of the membrane; it reads WLSQKGSTECERFLDKP. The helical transmembrane segment at 46–66 threads the bilayer; sequence VIALGVFLMVVAIAGLIGSCC. Topologically, residues 67 to 75 are cytoplasmic; sequence RVTWLLWVY. Residues 76-96 form a helical membrane-spanning segment; it reads LFVMFLLILLVFCITVFAFVV. Residues 97–235 lie on the Extracellular side of the membrane; that stretch reads TNKGAGEAIE…NVKSAWKKVA (139 aa). N192 carries an N-linked (GlcNAc...) asparagine glycan. A helical transmembrane segment spans residues 236-256; it reads IVNIVFLVFLIIVYSVGCCAF. The Cytoplasmic portion of the chain corresponds to 257-273; sequence RNNKRDDSYSRTYGYKP.

This sequence belongs to the tetraspanin (TM4SF) family.

The protein localises to the membrane. In terms of biological role, may be involved in the regulation of cell differentiation. The sequence is that of Tetraspanin-8 (TET8) from Arabidopsis thaliana (Mouse-ear cress).